Reading from the N-terminus, the 289-residue chain is Protease HtpX (289 aa).

2 consecutive transmembrane segments (helical) span residues 5–25 (IVLF…VMSL) and 33–53 (MSGL…ISLL). H140 contributes to the Zn(2+) binding site. E141 is a catalytic residue. H144 is a Zn(2+) binding site. A run of 2 helical transmembrane segments spans residues 155 to 175 (LLQG…GGFI) and 193 to 213 (GIVL…TMWF). E218 is a Zn(2+) binding site.

Belongs to the peptidase M48B family. It depends on Zn(2+) as a cofactor.

Its subcellular location is the cell inner membrane. The sequence is that of Protease HtpX from Xylella fastidiosa (strain M23).